The chain runs to 483 residues: Lipoamide acyltransferase component of branched-chain alpha-keto acid dehydrogenase complex, mitochondrial (483 aa).

The transit peptide at 1–75 (MIARRIWRSH…AMATDSNSGL (75 aa)) directs the protein to the mitochondrion. The Lipoyl-binding domain occupies 76–150 (IDVPLAQTGE…KVGETLVRLA (75 aa)). The residue at position 116 (lysine 116) is an N6-lipoyllysine. In terms of domain architecture, Peripheral subunit-binding (PSBD) spans 183 to 220 (LSTPAVRNLAKDLGIDINVITGTGKDGRVLKEDVLRFS). Active-site residues include histidine 453 and aspartate 457.

This sequence belongs to the 2-oxoacid dehydrogenase family. Forms a 24-polypeptide structural core with octahedral symmetry. It depends on (R)-lipoate as a cofactor. In terms of tissue distribution, expressed in the non-photosynthetic organs such as siliques, flowers and roots.

It is found in the mitochondrion matrix. It catalyses the reaction N(6)-[(R)-dihydrolipoyl]-L-lysyl-[protein] + 2-methylpropanoyl-CoA = N(6)-[(R)-S(8)-2-methylpropanoyldihydrolipoyl]-L-lysyl-[protein] + CoA. In terms of biological role, the branched-chain alpha-keto dehydrogenase complex catalyzes the overall conversion of alpha-keto acids to acyl-CoA and CO(2). It contains multiple copies of three enzymatic components: branched-chain alpha-keto acid decarboxylase (E1), lipoamide acyltransferase (E2) and lipoamide dehydrogenase (E3). Within this complex, the catalytic function of this enzyme is to accept, and to transfer to coenzyme A, acyl groups that are generated by the branched-chain alpha-keto acid decarboxylase component. Required during sugar starvation and acts under the control of a sugar-sensing mechanism involving Ser/Thr kinases and phosphatases. The sequence is that of Lipoamide acyltransferase component of branched-chain alpha-keto acid dehydrogenase complex, mitochondrial (BCE2) from Arabidopsis thaliana (Mouse-ear cress).